Consider the following 212-residue polypeptide: Pyrrolidone-carboxylate peptidase (212 aa).

Active-site residues include Glu80, Cys143, and His165.

Belongs to the peptidase C15 family. Homotetramer.

The protein localises to the cytoplasm. The catalysed reaction is Release of an N-terminal pyroglutamyl group from a polypeptide, the second amino acid generally not being Pro.. Removes 5-oxoproline from various penultimate amino acid residues except L-proline. The polypeptide is Pyrrolidone-carboxylate peptidase (Vibrio campbellii (strain ATCC BAA-1116)).